The following is a 63-amino-acid chain: Large ribosomal subunit protein uL29 (63 aa).

This sequence belongs to the universal ribosomal protein uL29 family.

This Escherichia coli O8 (strain IAI1) protein is Large ribosomal subunit protein uL29.